A 293-amino-acid polypeptide reads, in one-letter code: Small ribosomal subunit biogenesis GTPase RsgA (293 aa).

One can recognise a CP-type G domain in the interval 63 to 223 (KNQLNRPPIA…VADTPGFSSL (161 aa)). GTP contacts are provided by residues 112 to 115 (SKTD) and 166 to 174 (GQSGVGKSS). Zn(2+) is bound by residues C247, C252, H254, and C260.

This sequence belongs to the TRAFAC class YlqF/YawG GTPase family. RsgA subfamily. As to quaternary structure, monomer. Associates with 30S ribosomal subunit, binds 16S rRNA. It depends on Zn(2+) as a cofactor.

It is found in the cytoplasm. Functionally, one of several proteins that assist in the late maturation steps of the functional core of the 30S ribosomal subunit. Helps release RbfA from mature subunits. May play a role in the assembly of ribosomal proteins into the subunit. Circularly permuted GTPase that catalyzes slow GTP hydrolysis, GTPase activity is stimulated by the 30S ribosomal subunit. In Shouchella clausii (strain KSM-K16) (Alkalihalobacillus clausii), this protein is Small ribosomal subunit biogenesis GTPase RsgA.